Here is a 734-residue protein sequence, read N- to C-terminus: Probable carboxypeptidase X1 (734 aa).

An N-terminal signal peptide occupies residues 1 to 20 (MWGLLLALAAFAPAVGPALG). Positions 30-62 (AQPGTTKVPGSTPALHSSPAQPPAETANGTSEQ) are disordered. Positions 32 to 48 (PGTTKVPGSTPALHSSP) are enriched in polar residues. 4 N-linked (GlcNAc...) asparagine glycosylation sites follow: N57, N210, N220, and N318. In terms of domain architecture, F5/8 type C spans 113 to 274 (TGCPPLGLES…PCLRAEILAC (162 aa)). A disulfide bridge connects residues C115 and C274. Positions 298–621 (QHHNYKAMRK…DALLTYLEQV (324 aa)) constitute a Peptidase M14 domain. Residues H360 and E363 each contribute to the Zn(2+) site. 2 N-linked (GlcNAc...) asparagine glycosylation sites follow: N428 and N472. H498 provides a ligand contact to Zn(2+). Catalysis depends on E591, which acts as the Proton donor/acceptor.

This sequence belongs to the peptidase M14 family. The cofactor is Zn(2+).

It is found in the secreted. In terms of biological role, may be involved in cell-cell interactions. No carboxypeptidase activity was found yet. The sequence is that of Probable carboxypeptidase X1 (CPXM1) from Homo sapiens (Human).